A 366-amino-acid polypeptide reads, in one-letter code: Ribosomal RNA large subunit methyltransferase M (366 aa).

Residues S188, C221 to G224, D240, D260, and D277 contribute to the S-adenosyl-L-methionine site. K306 functions as the Proton acceptor in the catalytic mechanism.

Belongs to the class I-like SAM-binding methyltransferase superfamily. RNA methyltransferase RlmE family. RlmM subfamily. As to quaternary structure, monomer.

Its subcellular location is the cytoplasm. The catalysed reaction is cytidine(2498) in 23S rRNA + S-adenosyl-L-methionine = 2'-O-methylcytidine(2498) in 23S rRNA + S-adenosyl-L-homocysteine + H(+). Its function is as follows. Catalyzes the 2'-O-methylation at nucleotide C2498 in 23S rRNA. This Salmonella arizonae (strain ATCC BAA-731 / CDC346-86 / RSK2980) protein is Ribosomal RNA large subunit methyltransferase M.